Reading from the N-terminus, the 234-residue chain is Sugar fermentation stimulation protein homolog (234 aa).

It belongs to the SfsA family.

This Shewanella putrefaciens (strain CN-32 / ATCC BAA-453) protein is Sugar fermentation stimulation protein homolog.